Consider the following 162-residue polypeptide: AP-1 complex subunit sigma-1 (162 aa).

The protein belongs to the adaptor complexes small subunit family. In terms of assembly, adaptor protein complex 1 (AP-1) is a heterotetramer composed of two large adaptins (gamma-type subunit apl4 and beta-type subunit apl2), a medium adaptin (mu-type subunit apm1) and a small adaptin (sigma-type subunit aps1). AP-1 interacts with clathrin.

It is found in the cytoplasm. Its subcellular location is the nucleus. The protein resides in the cytoplasmic vesicle. The protein localises to the clathrin-coated vesicle membrane. It localises to the endosome. It is found in the golgi apparatus. Functionally, component of the AP-1 complex which links clathrin to receptors in coated vesicles. Clathrin-associated protein complexes are believed to interact with the cytoplasmic tails of membrane proteins, leading to their selection and concentration. The polypeptide is AP-1 complex subunit sigma-1 (vas2) (Schizosaccharomyces pombe (strain 972 / ATCC 24843) (Fission yeast)).